A 449-amino-acid polypeptide reads, in one-letter code: Pentalenene oxygenase (449 aa).

A helical membrane pass occupies residues V251–L273. Residue C393 coordinates heme.

Belongs to the cytochrome P450 family.

It is found in the membrane. It carries out the reaction pentalenene + 4 reduced [2Fe-2S]-[ferredoxin] + 2 O2 + 4 H(+) = pentalen-13-al + 4 oxidized [2Fe-2S]-[ferredoxin] + 3 H2O. Its pathway is antibiotic biosynthesis; neopentalenolactone biosynthesis. Functionally, catalyzes the conversion of pentalenene to pentalen-13-al by stepwise oxidation via pentalen-13-ol, a precursor of neopentalenolactone antibiotic. This Streptomyces avermitilis (strain ATCC 31267 / DSM 46492 / JCM 5070 / NBRC 14893 / NCIMB 12804 / NRRL 8165 / MA-4680) protein is Pentalenene oxygenase (ptlI).